Reading from the N-terminus, the 20-residue chain is Short cationic peptide-4d (20 aa).

E20 carries the glutamic acid 1-amide modification.

In terms of tissue distribution, expressed by the venom gland.

It is found in the secreted. The chain is Short cationic peptide-4d from Cupiennius salei (American wandering spider).